Consider the following 293-residue polypeptide: 4-hydroxy-tetrahydrodipicolinate synthase (293 aa).

Thr-45 is a binding site for pyruvate. Tyr-133 (proton donor/acceptor) is an active-site residue. Lys-162 (schiff-base intermediate with substrate) is an active-site residue. Ile-204 contributes to the pyruvate binding site.

The protein belongs to the DapA family. In terms of assembly, homotetramer; dimer of dimers.

The protein localises to the cytoplasm. The enzyme catalyses L-aspartate 4-semialdehyde + pyruvate = (2S,4S)-4-hydroxy-2,3,4,5-tetrahydrodipicolinate + H2O + H(+). It participates in amino-acid biosynthesis; L-lysine biosynthesis via DAP pathway; (S)-tetrahydrodipicolinate from L-aspartate: step 3/4. Catalyzes the condensation of (S)-aspartate-beta-semialdehyde [(S)-ASA] and pyruvate to 4-hydroxy-tetrahydrodipicolinate (HTPA). The sequence is that of 4-hydroxy-tetrahydrodipicolinate synthase from Brucella suis biovar 1 (strain 1330).